The primary structure comprises 479 residues: Poly(A) polymerase catalytic subunit (479 aa).

Residues Asp202 and Asp204 contribute to the active site. Residues Asp202, Asp204, and Asp253 each coordinate Ca(2+).

The protein belongs to the poxviridae poly(A) polymerase catalytic subunit family. In terms of assembly, heterodimer of a large (catalytic) subunit and a small (regulatory) subunit.

The catalysed reaction is RNA(n) + ATP = RNA(n)-3'-adenine ribonucleotide + diphosphate. Polymerase that creates the 3'-poly(A) tail of mRNA's. In Cynomys gunnisoni (Gunnison's prairie dog), this protein is Poly(A) polymerase catalytic subunit (OPG063).